We begin with the raw amino-acid sequence, 255 residues long: Small ribosomal subunit protein uS2 (255 aa).

It belongs to the universal ribosomal protein uS2 family.

The chain is Small ribosomal subunit protein uS2 (rpsB) from Streptococcus pyogenes serotype M1.